The primary structure comprises 786 residues: Endonuclease MutS2 (786 aa).

334–341 (GPNTGGKT) is a binding site for ATP. Positions 711–786 (LDLRGERYEN…GNGATVVYFK (76 aa)) constitute a Smr domain.

The protein belongs to the DNA mismatch repair MutS family. MutS2 subfamily. As to quaternary structure, homodimer. Binds to stalled ribosomes, contacting rRNA.

Functionally, endonuclease that is involved in the suppression of homologous recombination and thus may have a key role in the control of bacterial genetic diversity. Its function is as follows. Acts as a ribosome collision sensor, splitting the ribosome into its 2 subunits. Detects stalled/collided 70S ribosomes which it binds and splits by an ATP-hydrolysis driven conformational change. Acts upstream of the ribosome quality control system (RQC), a ribosome-associated complex that mediates the extraction of incompletely synthesized nascent chains from stalled ribosomes and their subsequent degradation. Probably generates substrates for RQC. The polypeptide is Endonuclease MutS2 (Ligilactobacillus salivarius (strain UCC118) (Lactobacillus salivarius)).